Here is a 1098-residue protein sequence, read N- to C-terminus: Bifunctional helicase and thymine dioxygenase JBP2 (1098 aa).

The interval 1–540 (MLNGLTRVST…PPLFVPTRLA (540 aa)) is thymine dioxygenase. Positions 415, 417, and 465 each coordinate Fe cation. Arg479 is a 2-oxoglutarate binding site. The interval 541 to 1098 (SHLAPVQLAA…RYQESVRESE (558 aa)) is DNA Helicase. A Helicase ATP-binding domain is found at 555–730 (VERTEKQSGC…YRLVGWVNKG (176 aa)). 568 to 575 (MTMGLGKT) is an ATP binding site. Positions 681-684 (DEGH) match the DEAH box motif. The Helicase C-terminal domain occupies 897 to 1057 (VLVDIVLRVQ…ALPDELEDCA (161 aa)).

This sequence in the C-terminal section; belongs to the SNF2/RAD54 helicase family. The protein in the N-terminal section; belongs to the TET family. JBP2 subfamily. Fe(2+) serves as cofactor.

Its subcellular location is the nucleus. The enzyme catalyses ATP + H2O = ADP + phosphate + H(+). The catalysed reaction is thymine + 2-oxoglutarate + O2 = 5-hydroxymethyluracil + succinate + CO2. In terms of biological role, dioxygenase that catalyzes the first step of DNA base J (beta-d-glucosyl-HOMedU) biosynthesis by converting thymine to 5-hydroxymethyluracil (HOMedU). DNA base J is a hypermodified thymidine residue found in the genome of kinetoplastid parasites, which is localized primarily to repetitive DNA, namely the telomeres, and is implicated in the regulation of antigenic variation. Probably also acts as a DNA helicase. Recognizes and binds specific regions of the genome, hydrolyzes ATP and allows the DNA base J de novo synthesis. Involved in initial synthesis of DNA base J, JBP1 being able to act via the basal level of DNA base J and propagate further synthesis. In contrast to JBP1, it does not specifically bind DNA base J, however it binds chromatin. The polypeptide is Bifunctional helicase and thymine dioxygenase JBP2 (JBP2) (Leishmania tarentolae (Sauroleishmania tarentolae)).